The primary structure comprises 290 residues: Acetyl-coenzyme A carboxylase carboxyl transferase subunit beta (290 aa).

One can recognise a CoA carboxyltransferase N-terminal domain in the interval 27–290 (LWHKCPSCEA…FTHSPSPVSA (264 aa)). Cysteine 31, cysteine 34, cysteine 50, and cysteine 53 together coordinate Zn(2+). The C4-type zinc finger occupies 31-53 (CPSCEAVLYRPELEKTLDVCPKC).

Belongs to the AccD/PCCB family. Acetyl-CoA carboxylase is a heterohexamer composed of biotin carboxyl carrier protein (AccB), biotin carboxylase (AccC) and two subunits each of ACCase subunit alpha (AccA) and ACCase subunit beta (AccD). The cofactor is Zn(2+).

It localises to the cytoplasm. It catalyses the reaction N(6)-carboxybiotinyl-L-lysyl-[protein] + acetyl-CoA = N(6)-biotinyl-L-lysyl-[protein] + malonyl-CoA. Its pathway is lipid metabolism; malonyl-CoA biosynthesis; malonyl-CoA from acetyl-CoA: step 1/1. In terms of biological role, component of the acetyl coenzyme A carboxylase (ACC) complex. Biotin carboxylase (BC) catalyzes the carboxylation of biotin on its carrier protein (BCCP) and then the CO(2) group is transferred by the transcarboxylase to acetyl-CoA to form malonyl-CoA. This is Acetyl-coenzyme A carboxylase carboxyl transferase subunit beta from Pseudomonas aeruginosa (strain UCBPP-PA14).